The chain runs to 139 residues: NAD(P) transhydrogenase subunit alpha part 2 (139 aa).

3 consecutive transmembrane segments (helical) span residues 49–69 (FWWL…VVWS), 78–98 (LMGV…IATG), and 107–127 (VLGF…FIVT).

As to quaternary structure, complex of an alpha and a beta chain; in Rhodospirillum, the alpha chain seems to be made of two subunits.

Its subcellular location is the cell inner membrane. It carries out the reaction NAD(+) + NADPH + H(+)(in) = NADH + NADP(+) + H(+)(out). The transhydrogenation between NADH and NADP is coupled to respiration and ATP hydrolysis and functions as a proton pump across the membrane. The sequence is that of NAD(P) transhydrogenase subunit alpha part 2 (pntAB) from Rhodospirillum rubrum (strain ATCC 11170 / ATH 1.1.1 / DSM 467 / LMG 4362 / NCIMB 8255 / S1).